Reading from the N-terminus, the 492-residue chain is Catalase isozyme 1 (492 aa).

Active-site residues include H65 and N138. Y348 contributes to the heme binding site.

It belongs to the catalase family. As to quaternary structure, homotetramer. It depends on heme as a cofactor. Scutella, milky endosperm of immature kernels, leaves and epicotyls.

It localises to the peroxisome. The catalysed reaction is 2 H2O2 = O2 + 2 H2O. In terms of biological role, occurs in almost all aerobically respiring organisms and serves to protect cells from the toxic effects of hydrogen peroxide. The sequence is that of Catalase isozyme 1 (CAT1) from Zea mays (Maize).